The sequence spans 344 residues: UDP-N-acetylglucosamine--N-acetylmuramyl-(pentapeptide) pyrophosphoryl-undecaprenol N-acetylglucosamine transferase (344 aa).

UDP-N-acetyl-alpha-D-glucosamine is bound by residues 9-11, Asn-118, Arg-157, Ser-188, and Gln-282; that span reads TGG.

The protein belongs to the glycosyltransferase 28 family. MurG subfamily.

Its subcellular location is the cell inner membrane. It catalyses the reaction di-trans,octa-cis-undecaprenyl diphospho-N-acetyl-alpha-D-muramoyl-L-alanyl-D-glutamyl-meso-2,6-diaminopimeloyl-D-alanyl-D-alanine + UDP-N-acetyl-alpha-D-glucosamine = di-trans,octa-cis-undecaprenyl diphospho-[N-acetyl-alpha-D-glucosaminyl-(1-&gt;4)]-N-acetyl-alpha-D-muramoyl-L-alanyl-D-glutamyl-meso-2,6-diaminopimeloyl-D-alanyl-D-alanine + UDP + H(+). It participates in cell wall biogenesis; peptidoglycan biosynthesis. In terms of biological role, cell wall formation. Catalyzes the transfer of a GlcNAc subunit on undecaprenyl-pyrophosphoryl-MurNAc-pentapeptide (lipid intermediate I) to form undecaprenyl-pyrophosphoryl-MurNAc-(pentapeptide)GlcNAc (lipid intermediate II). This chain is UDP-N-acetylglucosamine--N-acetylmuramyl-(pentapeptide) pyrophosphoryl-undecaprenol N-acetylglucosamine transferase, found in Aquifex aeolicus (strain VF5).